The sequence spans 181 residues: Large ribosomal subunit protein uL5c (181 aa).

It belongs to the universal ribosomal protein uL5 family. As to quaternary structure, part of the 50S ribosomal subunit; contacts the 5S rRNA.

The protein resides in the plastid. It localises to the chloroplast. Its function is as follows. Binds 5S rRNA, forms part of the central protuberance of the 50S subunit. This chain is Large ribosomal subunit protein uL5c (rpl5), found in Rhodomonas salina (Cryptomonas salina).